The primary structure comprises 63 residues: Cytochrome c oxidase subunit 7C, mitochondrial (63 aa).

Residues 1-16 constitute a mitochondrion transit peptide; the sequence is MLGQSIRRFTTSVVRR. The Mitochondrial matrix portion of the chain corresponds to 17 to 33; that stretch reads SHYEEGPGKNLPFSVEN. Lys25 carries the post-translational modification N6-acetyllysine; alternate. Lys25 is subject to N6-succinyllysine; alternate. Residues 34–60 form a helical membrane-spanning segment; it reads KWSLLAKMCLYFGSAFATPFLVVRHQL. At 61-63 the chain is on the mitochondrial intermembrane side; sequence LKT.

Belongs to the cytochrome c oxidase VIIc family. In terms of assembly, component of the cytochrome c oxidase (complex IV, CIV), a multisubunit enzyme composed of 14 subunits. The complex is composed of a catalytic core of 3 subunits MT-CO1, MT-CO2 and MT-CO3, encoded in the mitochondrial DNA, and 11 supernumerary subunits COX4I1 (or COX4I2), COX5A, COX5B, COX6A1 (or COX6A2), COX6B1 (or COX6B2), COX6C, COX7A2 (or COX7A1), COX7B, COX7C, COX8A and NDUFA4, which are encoded in the nuclear genome. The complex exists as a monomer or a dimer and forms supercomplexes (SCs) in the inner mitochondrial membrane with NADH-ubiquinone oxidoreductase (complex I, CI) and ubiquinol-cytochrome c oxidoreductase (cytochrome b-c1 complex, complex III, CIII), resulting in different assemblies (supercomplex SCI(1)III(2)IV(1) and megacomplex MCI(2)III(2)IV(2)). Interacts with RAB5IF.

It is found in the mitochondrion inner membrane. It functions in the pathway energy metabolism; oxidative phosphorylation. Component of the cytochrome c oxidase, the last enzyme in the mitochondrial electron transport chain which drives oxidative phosphorylation. The respiratory chain contains 3 multisubunit complexes succinate dehydrogenase (complex II, CII), ubiquinol-cytochrome c oxidoreductase (cytochrome b-c1 complex, complex III, CIII) and cytochrome c oxidase (complex IV, CIV), that cooperate to transfer electrons derived from NADH and succinate to molecular oxygen, creating an electrochemical gradient over the inner membrane that drives transmembrane transport and the ATP synthase. Cytochrome c oxidase is the component of the respiratory chain that catalyzes the reduction of oxygen to water. Electrons originating from reduced cytochrome c in the intermembrane space (IMS) are transferred via the dinuclear copper A center (CU(A)) of subunit 2 and heme A of subunit 1 to the active site in subunit 1, a binuclear center (BNC) formed by heme A3 and copper B (CU(B)). The BNC reduces molecular oxygen to 2 water molecules using 4 electrons from cytochrome c in the IMS and 4 protons from the mitochondrial matrix. The polypeptide is Cytochrome c oxidase subunit 7C, mitochondrial (COX7C) (Homo sapiens (Human)).